The chain runs to 424 residues: Histidine--tRNA ligase (424 aa).

The protein belongs to the class-II aminoacyl-tRNA synthetase family. As to quaternary structure, homodimer.

The protein localises to the cytoplasm. It carries out the reaction tRNA(His) + L-histidine + ATP = L-histidyl-tRNA(His) + AMP + diphosphate + H(+). The protein is Histidine--tRNA ligase of Protochlamydia amoebophila (strain UWE25).